The following is a 322-amino-acid chain: Glucokinase (322 aa).

Residue 10 to 15 (GDIGGT) participates in ATP binding.

Belongs to the bacterial glucokinase family.

The protein localises to the cytoplasm. The catalysed reaction is D-glucose + ATP = D-glucose 6-phosphate + ADP + H(+). This Hahella chejuensis (strain KCTC 2396) protein is Glucokinase.